The following is a 147-amino-acid chain: Transcriptional regulator FurA (147 aa).

Residues 1-85 are DNA-binding; that stretch reads MSSIPDYAEQ…GSVARYESRV (85 aa). His-34 and Glu-82 together coordinate Zn(2+). The tract at residues 86–147 is dimerization; it reads GDNHHHIVCR…SISDTSRSHP (62 aa). Fe cation is bound by residues Asp-87 and His-89. Zn(2+)-binding residues include His-91, Cys-94, Cys-97, and Asp-102. Residue Glu-109 coordinates Fe cation.

This sequence belongs to the Fur family. Homodimer.

The protein resides in the cytoplasm. In terms of biological role, represses transcription of the catalase-peroxidase gene katG and its own transcription by binding to the promoter region in a redox-dependent manner. The chain is Transcriptional regulator FurA (furA) from Mycobacterium bovis (strain ATCC BAA-935 / AF2122/97).